The chain runs to 525 residues: Potassium voltage-gated channel subfamily A member 3 (525 aa).

Residues 1–23 (MTVVPGDHLLEPEAAGGGGGDPP) form a disordered region. Residues 1 to 184 (MTVVPGDHLL…EYPESSGPAR (184 aa)) are Cytoplasmic-facing. A helical transmembrane segment spans residues 185–203 (GIAIVSVLVILISIVIFCL). Topologically, residues 204–244 (ETLPEFRDEKDYPASPSQDVFEAANNSTSGASSGASSFSDP) are extracellular. The N-linked (GlcNAc...) asparagine glycan is linked to N229. The helical transmembrane segment at 245-266 (FFVVETLCIIWFSFELLVRFFA) threads the bilayer. C267 carries S-palmitoyl cysteine lipidation. Topologically, residues 267–277 (CPSKATFSRNI) are cytoplasmic. Residues 278-298 (MNLIDIVAIIPYFITLGTELA) form a helical membrane-spanning segment. The Extracellular portion of the chain corresponds to 299–312 (ERQGNGQQAMSLAI). Residues 313-331 (LRVIRLVRVFRIFKLSRHS) traverse the membrane as a helical; Voltage-sensor segment. Topologically, residues 332–347 (KGLQILGQTLKASMRE) are cytoplasmic. A helical membrane pass occupies residues 348-367 (LGLLIFFLFIGVILFSSAVY). Over 368 to 408 (FAEADDPSSGFNSIPDAFWWAVVTMTTVGYGDMHPVTIGGK) the chain is Extracellular. A Selectivity filter motif is present at residues 394–399 (TVGYGD). A helical transmembrane segment spans residues 409–431 (IVGSLCAIAGVLTIALPVPVIVS). Over 432–525 (NFNYFYHRET…VNIKKIFTDV (94 aa)) the chain is Cytoplasmic. The tract at residues 432 to 525 (NFNYFYHRET…VNIKKIFTDV (94 aa)) is interaction with KCNE4. Phosphotyrosine is present on Y449. Position 470 is a phosphoserine; by PKA (S470). Residues 523-525 (TDV) carry the PDZ-binding motif.

It belongs to the potassium channel family. A (Shaker) (TC 1.A.1.2) subfamily. Kv1.3/KCNA3 sub-subfamily. As to quaternary structure, homotetramer. Forms heterooligomers with KCNE4 which inhibits KCNA3 activity by impairing localization to the cell membrane. The stoichiometry of KCNA3 and KCNE4 in the heterooligomers are 4:1, 4:2, 4:3 or 4:4 respectively. Increasing the number of KCNE4 subunits steadily slows the activation KCNA3 and decreases its abundance at the cell membrane. However, a single subunit of KCNE4 is sufficient for the cooperative enhancement of the inactivating function of the channel. Interacts with SEC24D; this interaction is reduced in the presence of KCNE4. Interacts with DLG1, DLG2 and DLG4 via their PDZ domains. Phosphorylation on Tyr-449 inhibits its channel activity. Post-translationally, N-glycosylation promotes the cell surface expression.

The protein resides in the cell membrane. It catalyses the reaction K(+)(in) = K(+)(out). With respect to regulation, activity is up-regulated by JAK2. Mediates the voltage-dependent potassium ion permeability of excitable membranes. Assuming opened or closed conformations in response to the voltage difference across the membrane, the protein forms a potassium-selective channel through which potassium ions may pass in accordance with their electrochemical gradient. This Rattus norvegicus (Rat) protein is Potassium voltage-gated channel subfamily A member 3 (Kcna3).